The following is a 290-amino-acid chain: MKRILLFVLTNVMVVAVLGIVASLLGVNRFLTANGLNLTALLGFALVMGFGGAIISLLISKPMAKWTTKLHMIDNPQSPDEAWIVGTVRKFADKAGIGMPEVGIFEGEPNAFATGAFKNSSLVAVSTGLLQNMTREEVEAVIGHEVAHIANGDMVTMTLIQGVMNTFVVFLSRVIGYAVDSFLRRGDDRSSGPGIGYYVSTIVLDIVLGFAAAIVVAWFSRQREFRADAGSAALMGQKQPMMNALARLGGLPAGELPKAVEAMGITGSIGKLFATHPPIEERIAALQNAR.

The next 2 helical transmembrane spans lie at 4 to 24 (ILLF…VASL) and 39 to 59 (TALL…SLLI). Position 144 (histidine 144) interacts with Zn(2+). Glutamate 145 is a catalytic residue. Histidine 148 provides a ligand contact to Zn(2+). Helical transmembrane passes span 159–179 (LIQG…GYAV) and 199–219 (VSTI…VAWF). Glutamate 224 contributes to the Zn(2+) binding site.

Belongs to the peptidase M48B family. It depends on Zn(2+) as a cofactor.

The protein localises to the cell inner membrane. The sequence is that of Protease HtpX homolog from Variovorax paradoxus (strain S110).